Reading from the N-terminus, the 437-residue chain is tRNA-2-methylthio-N(6)-dimethylallyladenosine synthase (437 aa).

The 115-residue stretch at Met-1–Ala-115 folds into the MTTase N-terminal domain. Residues Cys-10, Cys-46, Cys-78, Cys-148, Cys-152, and Cys-155 each coordinate [4Fe-4S] cluster. Residues Lys-134 to Glu-367 form the Radical SAM core domain. Positions Lys-370 to Gly-436 constitute a TRAM domain.

This sequence belongs to the methylthiotransferase family. MiaB subfamily. Monomer. [4Fe-4S] cluster serves as cofactor.

It is found in the cytoplasm. It carries out the reaction N(6)-dimethylallyladenosine(37) in tRNA + (sulfur carrier)-SH + AH2 + 2 S-adenosyl-L-methionine = 2-methylsulfanyl-N(6)-dimethylallyladenosine(37) in tRNA + (sulfur carrier)-H + 5'-deoxyadenosine + L-methionine + A + S-adenosyl-L-homocysteine + 2 H(+). Catalyzes the methylthiolation of N6-(dimethylallyl)adenosine (i(6)A), leading to the formation of 2-methylthio-N6-(dimethylallyl)adenosine (ms(2)i(6)A) at position 37 in tRNAs that read codons beginning with uridine. The protein is tRNA-2-methylthio-N(6)-dimethylallyladenosine synthase of Helicobacter pylori (strain J99 / ATCC 700824) (Campylobacter pylori J99).